A 344-amino-acid chain; its full sequence is Prickle-like protein 4 (344 aa).

One can recognise a PET domain in the interval 1–81; that stretch reads MSPQGPAVLS…ARLVLPKLEG (81 aa). LIM zinc-binding domains lie at 82-147 and 148-207; these read HTCE…LLRP and RCPA…RYSD. The disordered stretch occupies residues 253 to 344; that stretch reads GSSLQTQRGL…NASKTHCTMC (92 aa). Residues 257–271 show a composition bias toward polar residues; it reads QTQRGLPGSSPQQEN. The segment covering 272–296 has biased composition (basic and acidic residues); it reads RPGDKAEAPKGQEQCRLETIRDPKD. The segment covering 322 to 344 has biased composition (polar residues); sequence SWKTPGSLQAEDSNASKTHCTMC.

This sequence belongs to the prickle / espinas / testin family. Expressed in a broad range of normal tissues as well as in hepatocellular carcinoma, breast cancer and prostate cancer tissues.

This is Prickle-like protein 4 (PRICKLE4) from Homo sapiens (Human).